We begin with the raw amino-acid sequence, 195 residues long: BAG family molecular chaperone regulator 1A (195 aa).

Residues 6 to 72 (STVTIHYGNQ…KLGLKNHSKI (67 aa)) form the Ubiquitin-like domain. Positions 78-98 (HKQQRGSKEKDTVEPAPKAEA) are disordered. Positions 83-98 (GSKEKDTVEPAPKAEA) are enriched in basic and acidic residues. One can recognise a BAG domain in the interval 109–190 (EIKAIDQYVD…KMLDHVDQTS (82 aa)).

In terms of assembly, binds to the ATPase domain of HSP70/HSC chaperones.

Functionally, inhibits the chaperone activity of HSP70/HSC70 by promoting substrate release. In Schizosaccharomyces pombe (strain 972 / ATCC 24843) (Fission yeast), this protein is BAG family molecular chaperone regulator 1A (bag101).